The primary structure comprises 62 residues: Sucrase-isomaltase, intestinal (62 aa).

The Cytoplasmic portion of the chain corresponds to 2 to 12 (ARKKFSGLEIX). S7 is modified (phosphoserine; by PKA). A helical; Signal-anchor for type II membrane protein transmembrane segment spans residues 13-32 (LIVLFAIVLSIAIALVVVXA). Residues 33–38 (SKXPAV) lie on the Lumenal side of the membrane. Y59 carries the post-translational modification Sulfotyrosine.

Belongs to the glycosyl hydrolase 31 family. In terms of assembly, the resulting sucrase and isomaltase subunits stay associated with one another in a complex by non-covalent linkages. The precursor is proteolytically cleaved when exposed to pancreatic proteases in the intestinal lumen. Post-translationally, sulfated.

It localises to the apical cell membrane. The catalysed reaction is Hydrolysis of sucrose and maltose by an alpha-D-glucosidase-type action.. It carries out the reaction Hydrolysis of (1-&gt;6)-alpha-D-glucosidic linkages in some oligosaccharides produced from starch and glycogen by alpha-amylase, and in isomaltose.. Plays an important role in the final stage of carbohydrate digestion. Isomaltase activity is specific for both alpha-1,4- and alpha-1,6-oligosaccharides. The polypeptide is Sucrase-isomaltase, intestinal (SI) (Sus scrofa (Pig)).